We begin with the raw amino-acid sequence, 236 residues long: uncharacterized protein (236 aa).

3 disordered regions span residues Met-1–Ser-48, Val-67–Arg-122, and Lys-134–Thr-192. Residues Arg-85–Cys-99 are compositionally biased toward basic residues. Residues Pro-180 to Pro-189 are compositionally biased toward pro residues.

This is an uncharacterized protein from Encephalitozoon cuniculi (strain GB-M1) (Microsporidian parasite).